A 181-amino-acid chain; its full sequence is Oligoribonuclease (181 aa).

Positions 8-171 (LIWIDLEMTG…QDIQESIAEL (164 aa)) constitute an Exonuclease domain. Residue tyrosine 129 is part of the active site.

Belongs to the oligoribonuclease family.

It localises to the cytoplasm. In terms of biological role, 3'-to-5' exoribonuclease specific for small oligoribonucleotides. The chain is Oligoribonuclease from Shewanella sp. (strain MR-4).